Reading from the N-terminus, the 461-residue chain is Threonine/serine transporter ThrP (461 aa).

The next 12 helical transmembrane spans lie at 17 to 37 (IELI…AAST), 40 to 60 (WAGP…FFIM), 97 to 117 (WFMW…YVQF), 123 to 143 (AQWI…LAAV), 156 to 176 (IKVT…FFGF), 201 to 221 (GFLT…LIGI), 244 to 264 (ILIF…WNEI), 278 to 298 (IGIT…ALSG), 333 to 353 (VAGV…NYII), 360 to 380 (FVYV…VILI), 401 to 421 (IMFP…LIGM), and 430 to 450 (SLFV…VFGL).

It belongs to the amino acid-polyamine-organocation (APC) superfamily.

It localises to the cell inner membrane. It carries out the reaction L-threonine(in) + H(+)(in) = L-threonine(out) + H(+)(out). It catalyses the reaction L-serine(in) + H(+)(in) = L-serine(out) + H(+)(out). In terms of biological role, permease that mediates the proton-dependent threonine and serine uptake. This Salmonella typhi protein is Threonine/serine transporter ThrP.